Consider the following 233-residue polypeptide: Methyltransferase srdJ (233 aa).

Residues 1 to 32 (MFQVQTAGTRTGTSSPDTTTSEAGLGSTPPMP) are disordered. The segment covering 9–21 (TRTGTSSPDTTTS) has biased composition (low complexity). Positions 40, 52, and 81 each coordinate S-adenosyl-L-methionine. Residues 140 to 146 (EISSQKY) carry the Required for methyltransferase activity motif.

Belongs to the methyltransferase superfamily.

Methyltransferase; part of the gene cluster that mediates the biosynthesis of sordarial, a salicylic aldehyde structurally related to the phytotoxin pyriculol. The most interesting aspect of this pathway is formation of an aromatic product from the highly reducing polyketide synthase srdA. SrdA synthesizes a reduced polyketide chain from one molecule of acetyl-CoA and five molecules of malonyl-CoA. The polyketide chain is then reductively released as an aldehyde. The oxidoreductases srdC, srdD and srdE then oxidize one of the hydroxy groups to facilitate the intramolecular aldol condensation, followed by dehydration to yield a salicylic aldehyde. This aldehyde can undergo facile reduction by endogenous reductases to yield the alcohol 1-hydroxy-2-hydroxymethyl-3-pent-1,3-dienylbenzene. The flavin-dependent srdI counteract against the propensity of the aldehydes to be reduced under physiological conditions and is responsible for reoxidizing 1-hydroxy-2-hydroxymethyl-3-pent-1,3-dienylbenzene back to the salicylic aldehyde. This salicylic aldehyde is then selectively epoxidized by the cupin-domain-containing oxidoreductase srdB to yield the epoxide, which can be hydrolyzed stereoselectively by the hydrolase srdG to give the final product sordarial. In Neurospora crassa (strain ATCC 24698 / 74-OR23-1A / CBS 708.71 / DSM 1257 / FGSC 987), this protein is Methyltransferase srdJ.